Here is a 549-residue protein sequence, read N- to C-terminus: Hydroxylamine reductase (549 aa).

Residues Cys-5, Cys-8, Cys-17, and Cys-23 each coordinate [4Fe-4S] cluster. The hybrid [4Fe-2O-2S] cluster site is built by His-243, Glu-267, Cys-311, Cys-403, Cys-431, Cys-456, Glu-491, and Lys-493. At Cys-403 the chain carries Cysteine persulfide.

It belongs to the HCP family. [4Fe-4S] cluster serves as cofactor. Hybrid [4Fe-2O-2S] cluster is required as a cofactor.

The protein localises to the cytoplasm. It catalyses the reaction A + NH4(+) + H2O = hydroxylamine + AH2 + H(+). Its function is as follows. Catalyzes the reduction of hydroxylamine to form NH(3) and H(2)O. The protein is Hydroxylamine reductase of Desulfitobacterium hafniense (strain Y51).